Consider the following 89-residue polypeptide: Small ribosomal subunit protein uS15 (89 aa).

This sequence belongs to the universal ribosomal protein uS15 family. As to quaternary structure, part of the 30S ribosomal subunit. Forms a bridge to the 50S subunit in the 70S ribosome, contacting the 23S rRNA.

One of the primary rRNA binding proteins, it binds directly to 16S rRNA where it helps nucleate assembly of the platform of the 30S subunit by binding and bridging several RNA helices of the 16S rRNA. Its function is as follows. Forms an intersubunit bridge (bridge B4) with the 23S rRNA of the 50S subunit in the ribosome. The protein is Small ribosomal subunit protein uS15 of Streptococcus uberis (strain ATCC BAA-854 / 0140J).